The chain runs to 378 residues: Erythronate-4-phosphate dehydrogenase (378 aa).

Positions 45 and 66 each coordinate substrate. NAD(+)-binding residues include Asp146 and Thr175. The active site involves Arg208. Asp232 provides a ligand contact to NAD(+). Glu237 is a catalytic residue. The active-site Proton donor is the His254. Gly257 serves as a coordination point for NAD(+). Residue Tyr258 coordinates substrate.

Belongs to the D-isomer specific 2-hydroxyacid dehydrogenase family. PdxB subfamily. Homodimer.

The protein localises to the cytoplasm. The catalysed reaction is 4-phospho-D-erythronate + NAD(+) = (R)-3-hydroxy-2-oxo-4-phosphooxybutanoate + NADH + H(+). It functions in the pathway cofactor biosynthesis; pyridoxine 5'-phosphate biosynthesis; pyridoxine 5'-phosphate from D-erythrose 4-phosphate: step 2/5. Catalyzes the oxidation of erythronate-4-phosphate to 3-hydroxy-2-oxo-4-phosphonooxybutanoate. The sequence is that of Erythronate-4-phosphate dehydrogenase from Escherichia coli O17:K52:H18 (strain UMN026 / ExPEC).